We begin with the raw amino-acid sequence, 208 residues long: Uracil phosphoribosyltransferase (208 aa).

Residues Arg78, Arg103, and 130–138 (DPMLATGGS) contribute to the 5-phospho-alpha-D-ribose 1-diphosphate site. Uracil-binding positions include Ile193 and 198 to 200 (GDA). Residue Asp199 participates in 5-phospho-alpha-D-ribose 1-diphosphate binding.

The protein belongs to the UPRTase family. Mg(2+) serves as cofactor.

It catalyses the reaction UMP + diphosphate = 5-phospho-alpha-D-ribose 1-diphosphate + uracil. Its pathway is pyrimidine metabolism; UMP biosynthesis via salvage pathway; UMP from uracil: step 1/1. Allosterically activated by GTP. Its function is as follows. Catalyzes the conversion of uracil and 5-phospho-alpha-D-ribose 1-diphosphate (PRPP) to UMP and diphosphate. The polypeptide is Uracil phosphoribosyltransferase (Haemophilus ducreyi (strain 35000HP / ATCC 700724)).